Here is a 752-residue protein sequence, read N- to C-terminus: Pre-mRNA-processing factor 39 (752 aa).

The interval 1-148 is disordered; that stretch reads MEDSGESMTG…DPAAPQEPEL (148 aa). Residues 28 to 42 show a composition bias toward polar residues; the sequence is TTGTDDVTGLSTSDL. Low complexity-rich tracts occupy residues 43 to 56, 76 to 94, and 133 to 148; these read TTEQ…QTQP, QSAS…PPES, and EPAA…EPEL. 3 HAT repeats span residues 180–212, 214–246, and 254–289; these read NHLL…IERK, GYIQ…FLRE, and EAES…WETE. The interval 347-374 is disordered; the sequence is NKPSGDEDAETEAPGEELPPGTEDLPDP. Residues 352-361 show a composition bias toward acidic residues; it reads DEDAETEAPG. 2 HAT repeats span residues 408 to 440 and 442 to 474; these read AFEE…FELE and GTPE…YLES. Basic and acidic residues predominate over residues 678–699; that stretch reads SFKRKAENGSEEPDAKRQRTDD. The tract at residues 678–703 is disordered; the sequence is SFKRKAENGSEEPDAKRQRTDDQSVA. The stretch at 700 to 731 is one HAT 6 repeat; the sequence is QSVASGQMMDMQANHAGYNYNNWYQYNSWGSQ.

This sequence belongs to the PRP39 family.

The protein resides in the nucleus. Functionally, involved in pre-mRNA splicing. The sequence is that of Pre-mRNA-processing factor 39 (prpf39) from Danio rerio (Zebrafish).